The sequence spans 825 residues: Extracellular exo-alpha-L-arabinofuranosidase (825 aa).

An N-terminal signal peptide occupies residues 1-29 (MSRIRWRYGTAATALLVAAGLVPTATAHA). E58 provides a ligand contact to alpha-L-arabinofuranose. In terms of domain architecture, CBM-cenC spans 70–215 (AELVQNRSFE…ALDMVSLFPR (146 aa)). Alpha-L-arabinofuranose is bound by residues C247 and 379–380 (NE). Catalysis depends on E380, which acts as the Proton donor/acceptor.

This sequence belongs to the glycosyl hydrolase 51 family.

It localises to the secreted. The catalysed reaction is Hydrolysis of terminal non-reducing alpha-L-arabinofuranoside residues in alpha-L-arabinosides.. In terms of biological role, involved in the degradation of arabinan and is a key enzyme in the complete degradation of the plant cell wall. Catalyzes the cleavage of terminal alpha-L-arabinofuranosyl residues of arabinan present in the arabinofuranosyl polysaccharides or oligosaccharides. It cannot act on other arabinose-containing polysaccharides and arabinoxylo-oligosaccharides. It leaves most of the polymer intact, including most of the main-chain residues and the arabinose side chains. It acts preferentially on the linear alpha-(1-&gt;2)-linked arabinofuranobiosides and alpha-(1-&gt;3)-linked arabinofuranobiosides, and is much less effective on alpha-(1-&gt;5)-linked arabinofuranobiosides. It also hydrolyzes the terminal alpha-(1-&gt;3)-linked arabinofuranotriosides in preference to the alpha-(1-&gt;5)-linked arabinofuranotriosides. This chain is Extracellular exo-alpha-L-arabinofuranosidase, found in Streptomyces chartreusis.